Here is a 400-residue protein sequence, read N- to C-terminus: Na(+)/H(+) antiporter NhaA 1 (400 aa).

Helical transmembrane passes span 25-45 (IVLMFCAIIAIIIANSNFSSM), 67-87 (ILHWINDGLMAIFFLVVGMEI), 103-123 (ILPVSAAIGGMVVPAIIYALF), 130-150 (IIGWGIPMATDIAFALGILSL), 159-179 (IIIFLTALAIVDDLGAIIVIA), 184-204 (SEISWIALILGLIIFLAIILA), 213-233 (WLYIIFGIALWICFLKSGVHE), 264-284 (VLTPLSSFIIMPIFALANSGI), 303-323 (IIFGLFIGKQIGIFGASYILV), 339-359 (LYGASVLGGIGFTMSLFVSSL), and 372-392 (ISIIIASILSAAFGAAIFKII).

Belongs to the NhaA Na(+)/H(+) (TC 2.A.33) antiporter family.

It is found in the cell membrane. The enzyme catalyses Na(+)(in) + 2 H(+)(out) = Na(+)(out) + 2 H(+)(in). In terms of biological role, na(+)/H(+) antiporter that extrudes sodium in exchange for external protons. The sequence is that of Na(+)/H(+) antiporter NhaA 1 from Clostridium beijerinckii (strain ATCC 51743 / NCIMB 8052) (Clostridium acetobutylicum).